Reading from the N-terminus, the 350-residue chain is Ceramide synthase 1 (350 aa).

A2 is modified (N-acetylalanine). The next 6 membrane-spanning stretches (helical) occupy residues 53 to 73 (AHLA…WTAL), 103 to 123 (AWKF…LFGT), 148 to 168 (IAAA…ATLY), 176 to 196 (SVVM…SYAF), 239 to 259 (AADL…LYWF), and 287 to 307 (LLLL…AFAA). Residues 97 to 311 (AKMPESAWKF…IVAFAAKVLT (215 aa)) form the TLC domain.

Post-translationally, acetylated. Deacetylation by SIRT3 increases enzyme activity and promotes mitochondrial ceramide accumulation.

Its subcellular location is the endoplasmic reticulum membrane. It carries out the reaction a sphingoid base + octadecanoyl-CoA = an N-octadecanoyl-sphingoid base + CoA + H(+). The catalysed reaction is sphinganine + octadecanoyl-CoA = N-(octadecanoyl)-sphinganine + CoA + H(+). The enzyme catalyses hexadecasphinganine + octadecanoyl-CoA = N-octadecanoylhexadecasphinganine + CoA + H(+). It catalyses the reaction sphing-4-enine + octadecanoyl-CoA = N-octadecanoylsphing-4-enine + CoA + H(+). It carries out the reaction heptadecasphing-4-enine + octadecanoyl-CoA = N-octadecanoyl-heptadecasphing-4-enine + CoA + H(+). The catalysed reaction is 2-hydroxyoctadecanoyl-CoA + sphinganine = N-(2-hydroxyoctadecanoyl)-sphinganine + CoA + H(+). The enzyme catalyses eicosanoyl-CoA + sphinganine = N-eicosanoylsphinganine + CoA + H(+). It participates in lipid metabolism; sphingolipid metabolism. Its activity is regulated as follows. Inhibited by fumonisin B1. Functionally, ceramide synthase that catalyzes the transfer of the acyl chain from acyl-CoA to a sphingoid base, with high selectivity toward stearoyl-CoA (octadecanoyl-CoA; C18:0-CoA). N-acylates sphinganine and sphingosine bases to form dihydroceramides and ceramides in de novo synthesis and salvage pathways, respectively. Plays a predominant role in skeletal muscle in regulating C18 ceramide and dihydroceramide levels with an impact on whole-body glucose metabolism and insulin sensitivity. Protects from diet-induced obesity by suppressing the uptake of glucose in multiple organs in a FGF21-dependent way. Generates C18 ceramides in the brain, playing a critical role in cerebellar development and Purkinje cell function. In response to cellular stress mediates mitophagy, a known defense mechanism against cell transformation and aging. Upon mitochondria fission, generates C18 ceramides that anchor lipidated MAP1LC3B/LC3B-II autophagolysosomes to outer mitochondrial membranes to eliminate damaged mitochondria. The chain is Ceramide synthase 1 from Homo sapiens (Human).